A 432-amino-acid polypeptide reads, in one-letter code: Trigger factor (432 aa).

The PPIase FKBP-type domain occupies 161-246 (EDRVTIDFTG…LKKVEERELP (86 aa)).

It belongs to the FKBP-type PPIase family. Tig subfamily.

It localises to the cytoplasm. It carries out the reaction [protein]-peptidylproline (omega=180) = [protein]-peptidylproline (omega=0). Functionally, involved in protein export. Acts as a chaperone by maintaining the newly synthesized protein in an open conformation. Functions as a peptidyl-prolyl cis-trans isomerase. This Citrobacter koseri (strain ATCC BAA-895 / CDC 4225-83 / SGSC4696) protein is Trigger factor.